A 252-amino-acid chain; its full sequence is Probable transcriptional regulatory protein Lxx10750 (252 aa).

The protein belongs to the TACO1 family.

It localises to the cytoplasm. This Leifsonia xyli subsp. xyli (strain CTCB07) protein is Probable transcriptional regulatory protein Lxx10750.